We begin with the raw amino-acid sequence, 72 residues long: Translation initiation factor IF-1 (72 aa).

The S1-like domain maps to 1–72 (MSKEDAIEVM…TRGRIVYRYK (72 aa)).

Belongs to the IF-1 family. As to quaternary structure, component of the 30S ribosomal translation pre-initiation complex which assembles on the 30S ribosome in the order IF-2 and IF-3, IF-1 and N-formylmethionyl-tRNA(fMet); mRNA recruitment can occur at any time during PIC assembly.

Its subcellular location is the cytoplasm. Its function is as follows. One of the essential components for the initiation of protein synthesis. Stabilizes the binding of IF-2 and IF-3 on the 30S subunit to which N-formylmethionyl-tRNA(fMet) subsequently binds. Helps modulate mRNA selection, yielding the 30S pre-initiation complex (PIC). Upon addition of the 50S ribosomal subunit IF-1, IF-2 and IF-3 are released leaving the mature 70S translation initiation complex. This is Translation initiation factor IF-1 from Koribacter versatilis (strain Ellin345).